Here is a 683-residue protein sequence, read N- to C-terminus: Cysteine-rich receptor-like protein kinase 28 (683 aa).

Positions 1-24 (MEHVRVIFFFFACVLKIVPFICLA) are cleaved as a signal peptide. Residues 25-288 (QKDKYEFPPG…RTGKGKGGSK (264 aa)) lie on the Extracellular side of the membrane. 2 Gnk2-homologous domains span residues 32 to 136 (PPGF…NMII) and 142 to 251 (TTPT…TWRF). 4 N-linked (GlcNAc...) asparagine glycosylation sites follow: Asn43, Asn47, Asn73, and Asn153. The tract at residues 263 to 283 (PAIQPADSPTSAARTERTGKG) is disordered. A helical transmembrane segment spans residues 289 to 309 (VIVAIVIPIVFVALFAICLCL). At 310–683 (LLKWKKNKSV…DVTVSELSPR (374 aa)) the chain is on the cytoplasmic side. Residues 361–641 (FSPENELGRG…ALMLNSYSYT (281 aa)) enclose the Protein kinase domain. Residues 367-375 (LGRGGFGSV) and Lys389 contribute to the ATP site. Tyr434 carries the post-translational modification Phosphotyrosine. Asp486 (proton acceptor) is an active-site residue. Phosphoserine is present on Ser490. Thr528 is subject to Phosphothreonine. Tyr536 carries the post-translational modification Phosphotyrosine.

This sequence belongs to the protein kinase superfamily. Ser/Thr protein kinase family. CRK subfamily.

Its subcellular location is the membrane. It catalyses the reaction L-seryl-[protein] + ATP = O-phospho-L-seryl-[protein] + ADP + H(+). The enzyme catalyses L-threonyl-[protein] + ATP = O-phospho-L-threonyl-[protein] + ADP + H(+). This is Cysteine-rich receptor-like protein kinase 28 (CRK28) from Arabidopsis thaliana (Mouse-ear cress).